Here is a 362-residue protein sequence, read N- to C-terminus: UDP-N-acetylglucosamine--N-acetylmuramyl-(pentapeptide) pyrophosphoryl-undecaprenol N-acetylglucosamine transferase (362 aa).

UDP-N-acetyl-alpha-D-glucosamine contacts are provided by residues 14–16 (TGG), Asn126, Arg166, Ser193, and Gln294.

This sequence belongs to the glycosyltransferase 28 family. MurG subfamily.

Its subcellular location is the cell inner membrane. It carries out the reaction di-trans,octa-cis-undecaprenyl diphospho-N-acetyl-alpha-D-muramoyl-L-alanyl-D-glutamyl-meso-2,6-diaminopimeloyl-D-alanyl-D-alanine + UDP-N-acetyl-alpha-D-glucosamine = di-trans,octa-cis-undecaprenyl diphospho-[N-acetyl-alpha-D-glucosaminyl-(1-&gt;4)]-N-acetyl-alpha-D-muramoyl-L-alanyl-D-glutamyl-meso-2,6-diaminopimeloyl-D-alanyl-D-alanine + UDP + H(+). It functions in the pathway cell wall biogenesis; peptidoglycan biosynthesis. Its function is as follows. Cell wall formation. Catalyzes the transfer of a GlcNAc subunit on undecaprenyl-pyrophosphoryl-MurNAc-pentapeptide (lipid intermediate I) to form undecaprenyl-pyrophosphoryl-MurNAc-(pentapeptide)GlcNAc (lipid intermediate II). The chain is UDP-N-acetylglucosamine--N-acetylmuramyl-(pentapeptide) pyrophosphoryl-undecaprenol N-acetylglucosamine transferase from Paracoccus denitrificans (strain Pd 1222).